Here is a 291-residue protein sequence, read N- to C-terminus: DNA N6-methyl adenine demethylase (291 aa).

The Fe2OG dioxygenase domain occupies 85 to 256; sequence GLTLIHNFLS…RGRRIALTMR (172 aa). 171–173 is a 2-oxoglutarate binding site; the sequence is LEY. His184, Asp186, and His239 together coordinate Fe cation.

The protein belongs to the alkB family. As to quaternary structure, interacts with top-2; the interaction is required for localization of top-2 to DNA. Also interacts with mtss-1, his-24, ule-3, C18B2.3, pgl-1, ceh-93, mcm-4 and F37C4.5. The cofactor is Fe(2+).

It is found in the nucleus. It carries out the reaction an N(6)-methyl-2'-deoxyadenosine in DNA + 2-oxoglutarate + O2 = a 2'-deoxyadenosine in DNA + formaldehyde + succinate + CO2. Functionally, dioxygenase that specifically demethylates DNA methylated on the 6th position of adenine (N(6)-methyladenosine) DNA. N(6)-methyladenosine (m6A) DNA is involved in epigenetic transgenerational inheritance. Plays an essential role in DNA replication and repair in the germline during meiosis. Binds to components of the DNA replication machinery such as top-2, and directs their localization to DNA to control DNA replication. This Caenorhabditis elegans protein is DNA N6-methyl adenine demethylase.